The primary structure comprises 333 residues: Holliday junction branch migration complex subunit RuvB (333 aa).

The tract at residues 1-181 (MTRILDNDLI…FGITGHMEYY (181 aa)) is large ATPase domain (RuvB-L). ATP-binding positions include leucine 20, arginine 21, glycine 62, lysine 65, threonine 66, threonine 67, 128 to 130 (EDF), arginine 171, tyrosine 181, and arginine 218. Threonine 66 contributes to the Mg(2+) binding site. Residues 182–252 (QTADLTEIVE…ITDKALTMLD (71 aa)) are small ATPAse domain (RuvB-S). A head domain (RuvB-H) region spans residues 255-333 (QEGLDYVDQK…HLGYPYEKKH (79 aa)). Residues arginine 291, arginine 310, arginine 312, and arginine 315 each coordinate DNA.

It belongs to the RuvB family. Homohexamer. Forms an RuvA(8)-RuvB(12)-Holliday junction (HJ) complex. HJ DNA is sandwiched between 2 RuvA tetramers; dsDNA enters through RuvA and exits via RuvB. An RuvB hexamer assembles on each DNA strand where it exits the tetramer. Each RuvB hexamer is contacted by two RuvA subunits (via domain III) on 2 adjacent RuvB subunits; this complex drives branch migration. In the full resolvosome a probable DNA-RuvA(4)-RuvB(12)-RuvC(2) complex forms which resolves the HJ.

It is found in the cytoplasm. It catalyses the reaction ATP + H2O = ADP + phosphate + H(+). The RuvA-RuvB-RuvC complex processes Holliday junction (HJ) DNA during genetic recombination and DNA repair, while the RuvA-RuvB complex plays an important role in the rescue of blocked DNA replication forks via replication fork reversal (RFR). RuvA specifically binds to HJ cruciform DNA, conferring on it an open structure. The RuvB hexamer acts as an ATP-dependent pump, pulling dsDNA into and through the RuvAB complex. RuvB forms 2 homohexamers on either side of HJ DNA bound by 1 or 2 RuvA tetramers; 4 subunits per hexamer contact DNA at a time. Coordinated motions by a converter formed by DNA-disengaged RuvB subunits stimulates ATP hydrolysis and nucleotide exchange. Immobilization of the converter enables RuvB to convert the ATP-contained energy into a lever motion, pulling 2 nucleotides of DNA out of the RuvA tetramer per ATP hydrolyzed, thus driving DNA branch migration. The RuvB motors rotate together with the DNA substrate, which together with the progressing nucleotide cycle form the mechanistic basis for DNA recombination by continuous HJ branch migration. Branch migration allows RuvC to scan DNA until it finds its consensus sequence, where it cleaves and resolves cruciform DNA. This chain is Holliday junction branch migration complex subunit RuvB, found in Streptococcus equi subsp. zooepidemicus (strain MGCS10565).